Reading from the N-terminus, the 855-residue chain is Zinc finger protein 814 (855 aa).

The KRAB domain maps to 15-91; the sequence is VTFEDVAVNF…PMAGVSPKKA (77 aa). Residues 120–142 form a C2H2-type 1; degenerate zinc finger; sequence HRCEAWGNKLYDSGNFHQHQNEH. 22 consecutive C2H2-type zinc fingers follow at residues 242–264, 269–291, 296–318, 324–346, 352–374, 380–402, 408–430, 436–458, 464–486, 492–514, 520–542, 548–570, 576–598, 604–626, 632–654, 660–682, 688–710, 716–738, 744–766, 772–794, 800–822, and 828–850; these read YVCC…QRVH, HECG…QRVH, YECG…QRVH, YECG…QRFH, YGCE…QRVH, FKCG…QRVH, YQCG…QRVH, YECG…QQIH, YGCG…QRVH, YECG…QRMH, YKCG…QRVH, FKCG…QHGH, YVCR…QRIH, YACE…QRVH, YECN…KRIH, YECS…KRVH, and YKCE…QSSH. Lysine 335 participates in a covalent cross-link: Glycyl lysine isopeptide (Lys-Gly) (interchain with G-Cter in SUMO2). Residue lysine 391 forms a Glycyl lysine isopeptide (Lys-Gly) (interchain with G-Cter in SUMO2) linkage.

The polypeptide is Zinc finger protein 814 (ZNF814) (Homo sapiens (Human)).